The chain runs to 447 residues: Ribosomal protein uS12 methylthiotransferase RimO (447 aa).

One can recognise an MTTase N-terminal domain in the interval 10 to 120 (PKVGFVSLGC…VVNAVHDVVP (111 aa)). [4Fe-4S] cluster contacts are provided by Cys-19, Cys-55, Cys-84, Cys-153, Cys-157, and Cys-160. Residues 139-377 (LTPRHYAYLK…MAHQQAISAA (239 aa)) form the Radical SAM core domain. The TRAM domain occupies 380 to 447 (QMKIGKEIEV…DEYDLWAEML (68 aa)).

This sequence belongs to the methylthiotransferase family. RimO subfamily. The cofactor is [4Fe-4S] cluster.

Its subcellular location is the cytoplasm. The enzyme catalyses L-aspartate(89)-[ribosomal protein uS12]-hydrogen + (sulfur carrier)-SH + AH2 + 2 S-adenosyl-L-methionine = 3-methylsulfanyl-L-aspartate(89)-[ribosomal protein uS12]-hydrogen + (sulfur carrier)-H + 5'-deoxyadenosine + L-methionine + A + S-adenosyl-L-homocysteine + 2 H(+). Catalyzes the methylthiolation of an aspartic acid residue of ribosomal protein uS12. The chain is Ribosomal protein uS12 methylthiotransferase RimO from Pseudomonas savastanoi pv. phaseolicola (strain 1448A / Race 6) (Pseudomonas syringae pv. phaseolicola (strain 1448A / Race 6)).